A 485-amino-acid polypeptide reads, in one-letter code: Glycogen synthase (485 aa).

An ADP-alpha-D-glucose-binding site is contributed by K15.

This sequence belongs to the glycosyltransferase 1 family. Bacterial/plant glycogen synthase subfamily.

It carries out the reaction [(1-&gt;4)-alpha-D-glucosyl](n) + ADP-alpha-D-glucose = [(1-&gt;4)-alpha-D-glucosyl](n+1) + ADP + H(+). The protein operates within glycan biosynthesis; glycogen biosynthesis. Synthesizes alpha-1,4-glucan chains using ADP-glucose. This chain is Glycogen synthase, found in Fervidobacterium nodosum (strain ATCC 35602 / DSM 5306 / Rt17-B1).